The sequence spans 265 residues: Glutamate racemase (265 aa).

Substrate-binding positions include 12–13 (DS) and 44–45 (YG). Catalysis depends on Cys75, which acts as the Proton donor/acceptor. Residue 76–77 (NT) participates in substrate binding. The active-site Proton donor/acceptor is Cys186. 187 to 188 (TH) is a binding site for substrate.

The protein belongs to the aspartate/glutamate racemases family.

It carries out the reaction L-glutamate = D-glutamate. The protein operates within cell wall biogenesis; peptidoglycan biosynthesis. Provides the (R)-glutamate required for cell wall biosynthesis. In Pseudomonas putida (strain W619), this protein is Glutamate racemase.